Consider the following 368-residue polypeptide: Cytochrome b (368 aa).

Helical transmembrane passes span 33 to 53, 77 to 99, 112 to 132, and 178 to 198; these read FGSL…FLAM, WLIR…THTG, TWMV…LGYV, and FYAL…MHII. 2 residues coordinate heme b: His-83 and His-97. 2 residues coordinate heme b: His-182 and His-196. His-201 serves as a coordination point for a ubiquinone. The next 4 membrane-spanning stretches (helical) occupy residues 224–244, 288–308, 323–343, and 345–365; these read FSAK…SVVL, LGGV…PMMN, IAFW…SKPV, and SPFE…YMIM.

The protein belongs to the cytochrome b family. As to quaternary structure, the main subunits of complex b-c1 are: cytochrome b, cytochrome c1 and the Rieske protein. Requires heme b as cofactor.

The protein resides in the mitochondrion inner membrane. Functionally, component of the ubiquinol-cytochrome c reductase complex (complex III or cytochrome b-c1 complex) that is part of the mitochondrial respiratory chain. The b-c1 complex mediates electron transfer from ubiquinol to cytochrome c. Contributes to the generation of a proton gradient across the mitochondrial membrane that is then used for ATP synthesis. The protein is Cytochrome b (mt:Cyt-b) of Bugula neritina (Brown bryozoan).